We begin with the raw amino-acid sequence, 157 residues long: Lipoprotein signal peptidase (157 aa).

Transmembrane regions (helical) follow at residues 10–30 (LIFIVVFSLIFGTDQAIKYAI), 58–78 (FLEGGLKYLQILLILGLFIFL), and 84–104 (LFKNHAIEFGMVFGAGVSNVL). Residues aspartate 114 and aspartate 131 contribute to the active site. Residues 122 to 142 (FDFAIFNFADVMIDVGVGVLL) form a helical membrane-spanning segment.

Belongs to the peptidase A8 family.

Its subcellular location is the cell inner membrane. The enzyme catalyses Release of signal peptides from bacterial membrane prolipoproteins. Hydrolyzes -Xaa-Yaa-Zaa-|-(S,diacylglyceryl)Cys-, in which Xaa is hydrophobic (preferably Leu), and Yaa (Ala or Ser) and Zaa (Gly or Ala) have small, neutral side chains.. It functions in the pathway protein modification; lipoprotein biosynthesis (signal peptide cleavage). This protein specifically catalyzes the removal of signal peptides from prolipoproteins. This chain is Lipoprotein signal peptidase, found in Helicobacter pylori (strain Shi470).